The sequence spans 849 residues: Probable ubiquitin carboxyl-terminal hydrolase 1 (849 aa).

In terms of domain architecture, DUSP spans 20–120; sequence QPASLPFQDS…EGLAIERKVL (101 aa). Positions 279-848 constitute a USP domain; sequence CGLYNLGNSC…SAYVLFYRAK (570 aa). The active-site Nucleophile is the Cys288. His806 functions as the Proton acceptor in the catalytic mechanism.

The protein belongs to the peptidase C19 family.

It catalyses the reaction Thiol-dependent hydrolysis of ester, thioester, amide, peptide and isopeptide bonds formed by the C-terminal Gly of ubiquitin (a 76-residue protein attached to proteins as an intracellular targeting signal).. This chain is Probable ubiquitin carboxyl-terminal hydrolase 1 (ubp1), found in Schizosaccharomyces pombe (strain 972 / ATCC 24843) (Fission yeast).